The primary structure comprises 716 residues: Fatty acid oxidation complex subunit alpha (716 aa).

The tract at residues 1-189 (MIYQSPTIQV…KVGAVDAVVA (189 aa)) is enoyl-CoA hydratase/isomerase. Residue aspartate 296 coordinates substrate. Residues 311-716 (KDVKSAAVLG…AANNGSYYQA (406 aa)) form a 3-hydroxyacyl-CoA dehydrogenase region. NAD(+) contacts are provided by residues methionine 324, aspartate 343, 400–402 (VVE), lysine 407, and serine 429. Catalysis depends on histidine 450, which acts as the For 3-hydroxyacyl-CoA dehydrogenase activity. NAD(+) is bound at residue asparagine 453. The substrate site is built by asparagine 500 and tyrosine 660.

This sequence in the N-terminal section; belongs to the enoyl-CoA hydratase/isomerase family. It in the C-terminal section; belongs to the 3-hydroxyacyl-CoA dehydrogenase family. Heterotetramer of two alpha chains (FadB) and two beta chains (FadA).

It carries out the reaction a (3S)-3-hydroxyacyl-CoA + NAD(+) = a 3-oxoacyl-CoA + NADH + H(+). The enzyme catalyses a (3S)-3-hydroxyacyl-CoA = a (2E)-enoyl-CoA + H2O. The catalysed reaction is a 4-saturated-(3S)-3-hydroxyacyl-CoA = a (3E)-enoyl-CoA + H2O. It catalyses the reaction (3S)-3-hydroxybutanoyl-CoA = (3R)-3-hydroxybutanoyl-CoA. It carries out the reaction a (3Z)-enoyl-CoA = a 4-saturated (2E)-enoyl-CoA. The enzyme catalyses a (3E)-enoyl-CoA = a 4-saturated (2E)-enoyl-CoA. It participates in lipid metabolism; fatty acid beta-oxidation. Involved in the aerobic and anaerobic degradation of long-chain fatty acids via beta-oxidation cycle. Catalyzes the formation of 3-oxoacyl-CoA from enoyl-CoA via L-3-hydroxyacyl-CoA. It can also use D-3-hydroxyacyl-CoA and cis-3-enoyl-CoA as substrate. The chain is Fatty acid oxidation complex subunit alpha from Shewanella sp. (strain MR-7).